The chain runs to 193 residues: Non-specific lipid transfer protein GPI-anchored 10 (193 aa).

An N-terminal signal peptide occupies residues M1–A24. Cystine bridges form between C30-C71, C40-C55, C56-C98, and C69-C107. N-linked (GlcNAc...) asparagine glycosylation is found at N76, N87, and N103. The segment at S109–N140 is disordered. The span at P116 to S132 shows a compositional bias: low complexity. N-linked (GlcNAc...) asparagine glycosylation is present at N140. S168 carries the GPI-anchor amidated serine lipid modification. Residues S169–I193 constitute a propeptide, removed in mature form.

It belongs to the plant LTP family.

The protein localises to the cell membrane. Probable lipid transfer protein. In Arabidopsis thaliana (Mouse-ear cress), this protein is Non-specific lipid transfer protein GPI-anchored 10.